A 334-amino-acid polypeptide reads, in one-letter code: Atypical chemokine receptor 1 (334 aa).

Over 1-61 (MGNCLYPVET…CNLLDRSSLP (61 aa)) the chain is Extracellular. 3 N-linked (GlcNAc...) asparagine glycosylation sites follow: Asn-16, Asn-26, and Asn-32. Cystine bridges form between Cys-49-Cys-274 and Cys-127-Cys-193. Residues 62–82 (FFMLTSVLGMLASGSILFAIL) form a helical membrane-spanning segment. Topologically, residues 83 to 93 (RPFFHWQICPS) are cytoplasmic. The helical transmembrane segment at 94–114 (WPILAELAVGSALFSIAVPIL) threads the bilayer. The Extracellular segment spans residues 115–127 (APGLHSAHSTALC). The chain crosses the membrane as a helical span at residues 128 to 151 (NLGYWVWYTSAFAQALLIGCYACL). Residues 152–164 (NPRLNIGQLRGFT) lie on the Cytoplasmic side of the membrane. A helical membrane pass occupies residues 165–185 (LGLSVGLWGAAALSGLPVALA). Topologically, residues 186-205 (SDVYNGFCTFPSSRDMEALK) are extracellular. A helical membrane pass occupies residues 206 to 226 (YTHYAICFTIFTVLPLTLLAA). Over 227–242 (KGLKIALSKGPGPWVS) the chain is Cytoplasmic. Residues 243-263 (VLWIWFIFWWPHGMVLIFDAL) traverse the membrane as a helical segment. Residues 264–285 (VRSKTVLLYTCQSQKILDAMLN) are Extracellular-facing. Asn-285 is a glycosylation site (N-linked (GlcNAc...) asparagine). The helical transmembrane segment at 286–306 (VTEALSMLHCVATPLLLALFC) threads the bilayer. Topologically, residues 307 to 334 (HQTTRRSLSSLSLPTRQASQMDALAGKS) are cytoplasmic.

This sequence belongs to the G-protein coupled receptor 1 family. Atypical chemokine receptor subfamily. Expressed in liver and brain.

It localises to the early endosome. It is found in the recycling endosome. Its subcellular location is the membrane. Functionally, atypical chemokine receptor that controls chemokine levels and localization via high-affinity chemokine binding that is uncoupled from classic ligand-driven signal transduction cascades, resulting instead in chemokine sequestration, degradation, or transcytosis. Also known as interceptor (internalizing receptor) or chemokine-scavenging receptor or chemokine decoy receptor. Has a promiscuous chemokine-binding profile, interacting with inflammatory chemokines of both the CXC and the CC subfamilies but not with homeostatic chemokines. Acts as a receptor for chemokines including CCL2, CCL5, CCL7, CCL11, CCL13, CCL14, CCL17, CXCL5, CXCL6, IL8/CXCL8, CXCL11, GRO, RANTES, MCP-1 and TARC. May regulate chemokine bioavailability and, consequently, leukocyte recruitment through two distinct mechanisms: when expressed in endothelial cells, it sustains the abluminal to luminal transcytosis of tissue-derived chemokines and their subsequent presentation to circulating leukocytes; when expressed in erythrocytes, serves as blood reservoir of cognate chemokines but also as a chemokine sink, buffering potential surges in plasma chemokine levels. Its function is as follows. (Microbial infection) Acts as a receptor for the malaria parasite Plasmodium yoelii in mature erythrocytes but not reticulocytes. This chain is Atypical chemokine receptor 1 (Ackr1), found in Mus musculus (Mouse).